The following is a 244-amino-acid chain: Putative ribosomal recycling factor, mitochondrial (244 aa).

It belongs to the RRF family.

It localises to the mitochondrion. Functionally, necessary for protein synthesis in mitochondria. Functions as a ribosome recycling factor in mitochondria. This Schizosaccharomyces pombe (strain 972 / ATCC 24843) (Fission yeast) protein is Putative ribosomal recycling factor, mitochondrial (rrf1).